The chain runs to 65 residues: Protein C' (65 aa).

The protein belongs to the rhabdoviruses C protein family.

Seems to stimulates transcription by the viral polymerase. May play a role in viral pathogenesis or transmission by insects vectors. The protein is Protein C' (P) of Vesicular stomatitis New Jersey virus (strain Missouri subtype Hazelhurst) (VSNJV).